Reading from the N-terminus, the 211-residue chain is Thiamine-phosphate synthase (211 aa).

4-amino-2-methyl-5-(diphosphooxymethyl)pyrimidine-binding positions include 37-41 (QLRIK) and asparagine 69. The Mg(2+) site is built by aspartate 70 and aspartate 89. Serine 108 contacts 4-amino-2-methyl-5-(diphosphooxymethyl)pyrimidine. 134–136 (TQT) contacts 2-[(2R,5Z)-2-carboxy-4-methylthiazol-5(2H)-ylidene]ethyl phosphate. Lysine 137 lines the 4-amino-2-methyl-5-(diphosphooxymethyl)pyrimidine pocket. 2-[(2R,5Z)-2-carboxy-4-methylthiazol-5(2H)-ylidene]ethyl phosphate-binding positions include glycine 166 and 186–187 (VS).

This sequence belongs to the thiamine-phosphate synthase family. Mg(2+) is required as a cofactor.

The enzyme catalyses 2-[(2R,5Z)-2-carboxy-4-methylthiazol-5(2H)-ylidene]ethyl phosphate + 4-amino-2-methyl-5-(diphosphooxymethyl)pyrimidine + 2 H(+) = thiamine phosphate + CO2 + diphosphate. It catalyses the reaction 2-(2-carboxy-4-methylthiazol-5-yl)ethyl phosphate + 4-amino-2-methyl-5-(diphosphooxymethyl)pyrimidine + 2 H(+) = thiamine phosphate + CO2 + diphosphate. It carries out the reaction 4-methyl-5-(2-phosphooxyethyl)-thiazole + 4-amino-2-methyl-5-(diphosphooxymethyl)pyrimidine + H(+) = thiamine phosphate + diphosphate. It participates in cofactor biosynthesis; thiamine diphosphate biosynthesis; thiamine phosphate from 4-amino-2-methyl-5-diphosphomethylpyrimidine and 4-methyl-5-(2-phosphoethyl)-thiazole: step 1/1. Condenses 4-methyl-5-(beta-hydroxyethyl)thiazole monophosphate (THZ-P) and 2-methyl-4-amino-5-hydroxymethyl pyrimidine pyrophosphate (HMP-PP) to form thiamine monophosphate (TMP). The protein is Thiamine-phosphate synthase of Salmonella agona (strain SL483).